A 144-amino-acid chain; its full sequence is Single-stranded DNA-binding protein 3 (144 aa).

The region spanning 1-103 (MNKVVLIGRL…IVAEEVQFLE (103 aa)) is the SSB domain. A compositionally biased stretch (polar residues) spans 112 to 134 (MANDQFNNGNENGSMQLPDNNDI). Positions 112-144 (MANDQFNNGNENGSMQLPDNNDITPIDDGDIPF) are disordered.

As to quaternary structure, homotetramer.

This is Single-stranded DNA-binding protein 3 (ssb3) from Clostridium acetobutylicum (strain ATCC 824 / DSM 792 / JCM 1419 / IAM 19013 / LMG 5710 / NBRC 13948 / NRRL B-527 / VKM B-1787 / 2291 / W).